Here is a 556-residue protein sequence, read N- to C-terminus: Glucomannan 4-beta-mannosyltransferase 7 (556 aa).

A helical membrane pass occupies residues 58–78; that stretch reads VVVPVFKFLVLLCLVMSVMFF. Residue aspartate 158 is part of the active site. Positions 217 and 219 each coordinate substrate. Aspartate 311 is an active-site residue. The next 4 helical transmembrane spans lie at 390–410, 426–448, 502–522, and 526–546; these read IVAHILTFCFYCVILPATVLF, LITLLIAIGRLRSIHLLAFWVLF, LLELLVGAYLLFCGIYDIVYG, and LYVYLLFQSVAFFVVGFGFVG.

This sequence belongs to the glycosyltransferase 2 family. Plant cellulose synthase-like A subfamily. Ubiquitous.

It localises to the golgi apparatus membrane. It carries out the reaction GDP-mannose + (glucomannan)n = GDP + (glucomannan)n+1.. Probable mannan synthase which consists of a 4-beta-mannosyltransferase activity on mannan using GDP-mannose. The beta-1,4-mannan product is the backbone for galactomannan synthesis by galactomannan galactosyltransferase. Galactomannan is a noncellulosic polysaccharides of plant cell wall. Required for synthesis of a cell wall polysaccharide essential for pollen tube growth, for cell wall structure, or for signaling during plant embryo development. This is Glucomannan 4-beta-mannosyltransferase 7 from Arabidopsis thaliana (Mouse-ear cress).